A 94-amino-acid polypeptide reads, in one-letter code: Acylphosphatase (94 aa).

The 87-residue stretch at 8–94 (RLTAWVHGRV…REQITGFHER (87 aa)) folds into the Acylphosphatase-like domain. Residues R23 and N41 contribute to the active site.

This sequence belongs to the acylphosphatase family.

The catalysed reaction is an acyl phosphate + H2O = a carboxylate + phosphate + H(+). In Mycobacterium sp. (strain KMS), this protein is Acylphosphatase (acyP).